A 113-amino-acid chain; its full sequence is Molt-inhibiting hormone (113 aa).

The signal sequence occupies residues 1-35 (MMSLAHSKFSCQRTRLLAVVLLAALWSSSLQQAAA). Cystine bridges form between cysteine 42/cysteine 79, cysteine 59/cysteine 75, and cysteine 62/cysteine 88.

This sequence belongs to the arthropod CHH/MIH/GIH/VIH hormone family.

The protein resides in the secreted. In terms of biological role, inhibits Y-organs where molting hormone (ecdysteroid) is secreted. A molting cycle is initiated when MIH secretion diminishes or stops. In Callinectes sapidus (Blue crab), this protein is Molt-inhibiting hormone.